Consider the following 658-residue polypeptide: Carnitine O-palmitoyltransferase 2, mitochondrial (658 aa).

The transit peptide at 1 to 25 directs the protein to the mitochondrion; it reads MVARLLLRSWSRGLAVGPGAPCRPL. Residues 26-178 are Mitochondrial matrix-facing; sequence STGFEPSQYL…DLLEPEVFHL (153 aa). An N6-succinyllysine modification is found at Lys-69. Lys-79 carries the post-translational modification N6-acetyllysine. At Lys-85 the chain carries N6-succinyllysine. Positions 179-208 form an intramembrane region, note=Mitochondrial inner membrane; that stretch reads NPAKSDTDTFKRFIRFVPSFLSWYGAYLVN. Residues 209 to 658 lie on the Mitochondrial matrix side of the membrane; it reads AYPLDMSQYY…DALEGKMIKT (450 aa). The residue at position 239 (Lys-239) is an N6-acetyllysine; alternate. Position 239 is an N6-succinyllysine; alternate (Lys-239). Catalysis depends on His-372, which acts as the Proton acceptor. Lys-418 carries the N6-acetyllysine; alternate modification. An N6-succinyllysine; alternate modification is found at Lys-418. Residues Lys-424 and Lys-439 each carry the N6-succinyllysine modification. 452–464 is a CoA binding site; sequence GREFLKKQKLSPD. 3 residues coordinate (R)-carnitine: Tyr-486, Ser-488, and Thr-499. Lys-510 carries the post-translational modification N6-acetyllysine; alternate. Lys-510 bears the N6-succinyllysine; alternate mark.

It belongs to the carnitine/choline acetyltransferase family.

The protein resides in the mitochondrion inner membrane. The enzyme catalyses (R)-carnitine + hexadecanoyl-CoA = O-hexadecanoyl-(R)-carnitine + CoA. It carries out the reaction octanoyl-CoA + (R)-carnitine = O-octanoyl-(R)-carnitine + CoA. It catalyses the reaction decanoyl-CoA + (R)-carnitine = O-decanoyl-(R)-carnitine + CoA. The catalysed reaction is dodecanoyl-CoA + (R)-carnitine = O-dodecanoyl-R-carnitine + CoA. The enzyme catalyses tetradecanoyl-CoA + (R)-carnitine = O-tetradecanoyl-(R)-carnitine + CoA. It carries out the reaction (R)-carnitine + octadecanoyl-CoA = O-octadecanoyl-(R)-carnitine + CoA. It catalyses the reaction eicosanoyl-CoA + (R)-carnitine = O-eicosanoyl-(R)-carnitine + CoA. The catalysed reaction is (9Z)-tetradecenoyl-CoA + (R)-carnitine = O-(9Z)-tetradecenoyl-(R)-carnitine + CoA. The enzyme catalyses (5Z)-tetradecenoyl-CoA + (R)-carnitine = O-(5Z)-tetradecenoyl-(R)-carnitine + CoA. It carries out the reaction (R)-carnitine + (9Z)-octadecenoyl-CoA = O-(9Z)-octadecenoyl-(R)-carnitine + CoA. It catalyses the reaction 4,8-dimethylnonanoyl-CoA + (R)-carnitine = O-4,8-dimethylnonanoyl-(R)-carnitine + CoA. Its pathway is lipid metabolism; fatty acid beta-oxidation. Its function is as follows. Involved in the intramitochondrial synthesis of acylcarnitines from accumulated acyl-CoA metabolites. Reconverts acylcarnitines back into the respective acyl-CoA esters that can then undergo beta-oxidation, an essential step for the mitochondrial uptake of long-chain fatty acids and their subsequent beta-oxidation in the mitochondrion. Active with medium (C8-C12) and long-chain (C14-C18) acyl-CoA esters. The polypeptide is Carnitine O-palmitoyltransferase 2, mitochondrial (CPT2) (Bos taurus (Bovine)).